The chain runs to 132 residues: Small ribosomal subunit protein uS17c (132 aa).

The span at 1–11 (MLLLSSPFVSV) shows a compositional bias: low complexity. Disordered regions lie at residues 1-23 (MLLLSSPFVSVSPPPPPLSSHGA) and 104-132 (PLPPRDTRRKSQLLPPLQSDDDQEPSSRE). A chloroplast-targeting transit peptide spans 1-31 (MLLLSSPFVSVSPPPPPLSSHGARPALRIEA). Residues 122 to 132 (SDDDQEPSSRE) show a composition bias toward acidic residues.

The protein belongs to the universal ribosomal protein uS17 family. Part of the 30S ribosomal subunit.

It is found in the plastid. The protein localises to the chloroplast. One of the primary rRNA binding proteins, it binds specifically to the 5'-end of 16S ribosomal RNA. Functionally, in the hcf60 mutation the Activator tag is inserted 17 base pars upstream of the initiation codon. This mutation is seedling lethal, due to plastid ribosome insufficiency. However under non-light stressed conditions photosynthesis and oxygen evolution can occur. This is Small ribosomal subunit protein uS17c (RPS17) from Zea mays (Maize).